The following is a 321-amino-acid chain: HPr kinase/phosphorylase (321 aa).

Active-site residues include His143 and Lys164. 158–165 (GKSGVGKS) contacts ATP. A Mg(2+)-binding site is contributed by Ser165. Asp182 (proton acceptor; for phosphorylation activity. Proton donor; for dephosphorylation activity) is an active-site residue. The segment at 206–215 (MEIRGLGILN) is important for the catalytic mechanism of both phosphorylation and dephosphorylation. Glu207 serves as a coordination point for Mg(2+). Residue Arg248 is part of the active site. The interval 269–274 (PVRPGR) is important for the catalytic mechanism of dephosphorylation.

The protein belongs to the HPrK/P family. As to quaternary structure, homohexamer. Mg(2+) is required as a cofactor.

It catalyses the reaction [HPr protein]-L-serine + ATP = [HPr protein]-O-phospho-L-serine + ADP + H(+). It carries out the reaction [HPr protein]-O-phospho-L-serine + phosphate + H(+) = [HPr protein]-L-serine + diphosphate. Its function is as follows. Catalyzes the ATP- as well as the pyrophosphate-dependent phosphorylation of a specific serine residue in HPr, a phosphocarrier protein of the phosphoenolpyruvate-dependent sugar phosphotransferase system (PTS). HprK/P also catalyzes the pyrophosphate-producing, inorganic phosphate-dependent dephosphorylation (phosphorolysis) of seryl-phosphorylated HPr (P-Ser-HPr). In Leptospira interrogans serogroup Icterohaemorrhagiae serovar copenhageni (strain Fiocruz L1-130), this protein is HPr kinase/phosphorylase.